The primary structure comprises 155 residues: Small ribosomal subunit protein uS7 (155 aa).

It belongs to the universal ribosomal protein uS7 family. Part of the 30S ribosomal subunit. Contacts proteins S9 and S11.

In terms of biological role, one of the primary rRNA binding proteins, it binds directly to 16S rRNA where it nucleates assembly of the head domain of the 30S subunit. Is located at the subunit interface close to the decoding center, probably blocks exit of the E-site tRNA. This is Small ribosomal subunit protein uS7 from Sulfurimonas denitrificans (strain ATCC 33889 / DSM 1251) (Thiomicrospira denitrificans (strain ATCC 33889 / DSM 1251)).